Consider the following 169-residue polypeptide: Der GTPase-activating protein YihI (169 aa).

Disordered regions lie at residues 1–100 (MKPS…AELE) and 144–169 (GLSYDDDEEEEEDEKQEDMMRLLRGN). The span at 10–19 (SKGHAKARRK) shows a compositional bias: basic residues. A compositionally biased stretch (basic and acidic residues) spans 20–30 (TREELDQEARD). Residues 31 to 40 (RKRQKKRRGH) are compositionally biased toward basic residues. Residues 49 to 58 (GNTSSGSKGQ) show a composition bias toward polar residues. Acidic residues predominate over residues 147-159 (YDDDEEEEEDEKQ). Residues 160–169 (EDMMRLLRGN) show a composition bias toward basic and acidic residues.

This sequence belongs to the YihI family. In terms of assembly, interacts with Der.

In terms of biological role, a GTPase-activating protein (GAP) that modifies Der/EngA GTPase function. May play a role in ribosome biogenesis. This is Der GTPase-activating protein YihI from Escherichia coli (strain SMS-3-5 / SECEC).